A 560-amino-acid chain; its full sequence is Zinc finger protein 250 (560 aa).

The KRAB domain occupies 22–93 (LTFEDVAVLL…DRKGAKKSQG (72 aa)). Residues Lys125, Lys136, Lys148, and Lys162 each participate in a glycyl lysine isopeptide (Lys-Gly) (interchain with G-Cter in SUMO2) cross-link. The C2H2-type 1 zinc finger occupies 199-221 (YMCVECGKCFGRSSHLLQHQRIH). A Glycyl lysine isopeptide (Lys-Gly) (interchain with G-Cter in SUMO2) cross-link involves residue Lys225. 7 C2H2-type zinc fingers span residues 227–249 (YVCS…RRIH), 255–277 (YECN…HKIH), 283–305 (HECL…QRIH), 311–333 (YVCP…QRVH), 339–361 (HRCN…QRIH), 367–389 (YTCS…HNVH), and 395–417 (YECS…ERIH). Lys421 participates in a covalent cross-link: Glycyl lysine isopeptide (Lys-Gly) (interchain with G-Cter in SUMO2). 5 C2H2-type zinc fingers span residues 423–445 (YACY…QRVH), 451–473 (YVCG…ERIH), 479–501 (FQCT…LRTH), 507–529 (YECN…QRIH), and 535–557 (YECG…QKVH).

Belongs to the krueppel C2H2-type zinc-finger protein family.

It is found in the nucleus. In terms of biological role, may be involved in transcriptional regulation. The protein is Zinc finger protein 250 (ZNF250) of Homo sapiens (Human).